A 616-amino-acid polypeptide reads, in one-letter code: MALLQISEPGLSAAPHQRRLAAGIDLGTTNSLVATVRSGQAETLADHEGRHLLPSVVHYQQQGHSVGYDARANAALDTANTISSVKRLMGRSLADIQQRYPHLPYQFQASENGLPMIETAAGLLNPVRVSADILKALAARATEALAGDLDGVVITVPAYFDDAQRQGTKDAARLAGLHVLRLLNEPTAAAIAYGLDSGQEGVIAVYDLGGGTFDISILRLSRGVFEVLATGGDSALGGDDFDHLLADYIREQAGIPDRSDNRVQRELLDAAIAAKIALSDADSVTVNVAGWQGEISREQFNELIAPLVKRTLLACRRALKDAGVEADEVLEVVMVGGSTRVPLVRERVGEFFGRPPLTSINPDKVVAIGAAIQADILVGNKPDSEMLLLDVIPLSLGLETMGGLVEKVIPRNTTIPVARAQDFTTFKDGQTAMSIHVMQGERELVQDCRSLARFALRGIPALPAGGAHIRVTFQVDADGLLSVTAMEKSTGVEASIQVKPSYGLTDSEIASMIKDSMSYAEQDVKARMLAEQKVEAARVLESLHGALAADAALLSAAERQVIDDAAAHLSEVAQGDDVDAIEQAIKNVDKQTQDFAARRMDQSVRRALKGHSVDEV.

The protein belongs to the heat shock protein 70 family.

Functionally, chaperone involved in the maturation of iron-sulfur cluster-containing proteins. Has a low intrinsic ATPase activity which is markedly stimulated by HscB. Involved in the maturation of IscU. The sequence is that of Chaperone protein HscA from Escherichia fergusonii (strain ATCC 35469 / DSM 13698 / CCUG 18766 / IAM 14443 / JCM 21226 / LMG 7866 / NBRC 102419 / NCTC 12128 / CDC 0568-73).